The chain runs to 159 residues: Neuroglobin (159 aa).

The Globin domain occupies 3-151 (KLSSKDKELI…VVASMSRGWA (149 aa)). H66 and H98 together coordinate heme b.

This sequence belongs to the globin family. As to quaternary structure, monomer. Homodimers and homotetramers. Mainly monomeric but also detected as part of homodimers and homotetramers.

The protein localises to the cytoplasm. The protein resides in the cytosol. It localises to the mitochondrion matrix. It carries out the reaction Fe(III)-heme b-[protein] + nitric oxide + H2O = Fe(II)-heme b-[protein] + nitrite + 2 H(+). Monomeric globin with a bis-histidyl six-coordinate heme-iron atom through which it can bind dioxygen, carbon monoxide and nitric oxide. Could help transport oxygen and increase its availability to the metabolically active neuronal tissues, though its low quantity in tissues as well as its high affinity for dioxygen, which may limit its oxygen-releasing ability, argue against it. The ferrous/deoxygenated form exhibits a nitrite reductase activity and it could produce nitric oxide which in turn inhibits cellular respiration in response to hypoxia. In its ferrous/deoxygenated state, it may also exhibit GDI (Guanine nucleotide Dissociation Inhibitor) activity toward heterotrimeric G-alpha proteins, thereby regulating signal transduction to facilitate neuroprotective responses in the wake of hypoxia and associated oxidative stress. This Tetraodon nigroviridis (Spotted green pufferfish) protein is Neuroglobin (ngb).